Here is a 102-residue protein sequence, read N- to C-terminus: Small ribosomal subunit protein uS10 (102 aa).

This sequence belongs to the universal ribosomal protein uS10 family. Part of the 30S ribosomal subunit.

Functionally, involved in the binding of tRNA to the ribosomes. The protein is Small ribosomal subunit protein uS10 of Methylobacterium radiotolerans (strain ATCC 27329 / DSM 1819 / JCM 2831 / NBRC 15690 / NCIMB 10815 / 0-1).